A 279-amino-acid chain; its full sequence is UPF0173 metal-dependent hydrolase MXAN_1394 (279 aa).

This sequence belongs to the UPF0173 family.

This Myxococcus xanthus (strain DK1622) protein is UPF0173 metal-dependent hydrolase MXAN_1394.